Consider the following 216-residue polypeptide: Orotidine 5'-phosphate decarboxylase (216 aa).

Substrate-binding positions include aspartate 12, lysine 34, aspartate 62–threonine 71, serine 119, proline 172–lysine 182, glycine 194, and arginine 195. The active-site Proton donor is lysine 64.

This sequence belongs to the OMP decarboxylase family. Type 1 subfamily. Homodimer.

It catalyses the reaction orotidine 5'-phosphate + H(+) = UMP + CO2. Its pathway is pyrimidine metabolism; UMP biosynthesis via de novo pathway; UMP from orotate: step 2/2. Catalyzes the decarboxylation of orotidine 5'-monophosphate (OMP) to uridine 5'-monophosphate (UMP). In Methanosphaera stadtmanae (strain ATCC 43021 / DSM 3091 / JCM 11832 / MCB-3), this protein is Orotidine 5'-phosphate decarboxylase.